The sequence spans 117 residues: UPF0102 protein FTN_0424 (117 aa).

Belongs to the UPF0102 family.

The chain is UPF0102 protein FTN_0424 from Francisella tularensis subsp. novicida (strain U112).